The primary structure comprises 593 residues: MGKKSRVKTQKSGTGATAAVSPKELLNLTSELLQKCSSPTPGPGKEWEEYIQIRSLVEKIRKKQKGLSVVFDGKRDDYFPELIKWATENGASTEGFEIANFEEEGFGLKATREIKAEELFLWVPRKLLMTVESAKNSVLGSLYSQDRILQAMGNITLAFHLLCERANPNSFWLPYIQTLPSEYDTPLYFEEDEVQYLRSTQAIHDVFSQYKNTARQYAYFYKVIQTHPNASKLPLKDSFTYDDYRWAVSSVMTRQNQIPTEDGSRVTLALIPLWDMCNHTNGLITTGYNLEDDRCECVALQDFKAGEQIYIFYGTRSNAEFVIHSGFFFDNNSHDRVKIKLGVSKSDRLYAMKAEVLARAGIPTSSVFALHSIEPPISAQLLAFLRVFCMNEEELKEHLIGEHAIDKIFTLGNSEFPISWDNEVKLWTFLEARASLLLKTYKTTVEDDKSFLETHDLTSHATMAIKLRLGEKEILEKAVKSAAASREYYTKQMADGAPLPKYEESNIALLENTVADSRLPIVLRNLDDVEEQGDLKIDEAMDAEVTENGFVNGENSLFNGTKSESENLIKEESNRETEDAKESSSESTDEVKE.

A disordered region spans residues 1–21 (MGKKSRVKTQKSGTGATAAVS). S-adenosyl-L-methionine contacts are provided by residues Arg-75, 104–106 (EGF), Arg-254, 275–279 (DMCNH), and 325–327 (SGF). Residues 94–314 (EGFEIANFEE…AGEQIYIFYG (221 aa)) form the SET domain. The interval 549–593 (GFVNGENSLFNGTKSESENLIKEESNRETEDAKESSSESTDEVKE) is disordered. The segment covering 553–562 (GENSLFNGTK) has biased composition (polar residues). The segment covering 563 to 593 (SESENLIKEESNRETEDAKESSSESTDEVKE) has biased composition (basic and acidic residues).

The protein belongs to the class V-like SAM-binding methyltransferase superfamily. SETD3 actin-histidine methyltransferase family.

Its subcellular location is the cytoplasm. It catalyses the reaction L-histidyl-[protein] + S-adenosyl-L-methionine = N(tele)-methyl-L-histidyl-[protein] + S-adenosyl-L-homocysteine + H(+). Functionally, protein-histidine N-methyltransferase that specifically mediates 3-methylhistidine (tele-methylhistidine) methylation of actin at 'His-73'. Does not have protein-lysine N-methyltransferase activity and probably only catalyzes histidine methylation of actin. The sequence is that of Actin-histidine N-methyltransferase from Gallus gallus (Chicken).